Reading from the N-terminus, the 227-residue chain is Ornithine decarboxylase antizyme 1 (227 aa).

This sequence belongs to the ODC antizyme family. In terms of assembly, interacts with ODC1 and thereby sterically blocks ODC homodimerization. Forms a ternary complex with PSMB4 and OAZ1 before PSMB4 is incorporated into the 20S proteasome. Interacts with AZIN2; this interaction disrupts the interaction between the antizyme and ODC1. Interacts with FAM171A1.

Its function is as follows. Ornithine decarboxylase (ODC) antizyme protein that negatively regulates ODC activity and intracellular polyamine biosynthesis and uptake in response to increased intracellular polyamine levels. Binds to ODC monomers, inhibiting the assembly of the functional ODC homodimer, and targets the monomers for ubiquitin-independent proteolytic destruction by the 26S proteasome. Triggers ODC degradation by inducing the exposure of a cryptic proteasome-interacting surface of ODC. Stabilizes AZIN2 by interfering with its ubiquitination. Also inhibits cellular uptake of polyamines by inactivating the polyamine uptake transporter. SMAD1/OAZ1/PSMB4 complex mediates the degradation of the CREBBP/EP300 repressor SNIP1. Involved in the translocation of AZIN2 from ER-Golgi intermediate compartment (ERGIC) to the cytosol. The chain is Ornithine decarboxylase antizyme 1 (Oaz1) from Mus musculus (Mouse).